The chain runs to 238 residues: SPbeta prophage-derived uncharacterized protein YorM (238 aa).

A signal peptide spans 1–37; that stretch reads MFKKLIDKHKKYVYHRINKMALFATIGLLGVGLVYSA. The segment covering 111 to 121 has biased composition (basic residues); it reads TKTKKVQKTNT. The interval 111-132 is disordered; that stretch reads TKTKKVQKTNTKRNLDKAVSKS.

This Bacillus subtilis (strain 168) protein is SPbeta prophage-derived uncharacterized protein YorM (yorM).